The primary structure comprises 330 residues: Solute-binding protein NAS141_03721 (330 aa).

The first 27 residues, 1-27 (MSFFTKTAQLVSGAAVAATLFTATAQA), serve as a signal peptide directing secretion. Residues glutamate 75, asparagine 97, arginine 153, arginine 173, tyrosine 196, 213–214 (NE), and arginine 240 contribute to the alpha-D-mannuronate site. Alpha-D-taluronate-binding positions include glutamate 75, asparagine 97, arginine 153, arginine 173, tyrosine 196, 213–214 (NE), and arginine 240.

This sequence belongs to the bacterial solute-binding protein 7 family. As to quaternary structure, the complex is comprised of an extracytoplasmic solute-binding protein and a heteromeric permease formed by two transmembrane proteins.

The protein localises to the periplasm. In terms of biological role, solute-binding protein that binds D-mannuronate and D-taluronate (in vitro). Probably part of a tripartite ATP-independent periplasmic (TRAP) transport system that mediates solute transport into the cytoplasm. The protein is Solute-binding protein NAS141_03721 of Sulfitobacter sp. (strain NAS-14.1).